The sequence spans 256 residues: Diaminopimelate epimerase (256 aa).

Substrate is bound by residues N11 and N63. C72 serves as the catalytic Proton donor. Substrate-binding positions include 73–74, N169, and 187–188; these read GN and ER. C197 acts as the Proton acceptor in catalysis. 198–199 provides a ligand contact to substrate; the sequence is GT.

It belongs to the diaminopimelate epimerase family. Homodimer.

Its subcellular location is the cytoplasm. The enzyme catalyses (2S,6S)-2,6-diaminopimelate = meso-2,6-diaminopimelate. The protein operates within amino-acid biosynthesis; L-lysine biosynthesis via DAP pathway; DL-2,6-diaminopimelate from LL-2,6-diaminopimelate: step 1/1. In terms of biological role, catalyzes the stereoinversion of LL-2,6-diaminopimelate (L,L-DAP) to meso-diaminopimelate (meso-DAP), a precursor of L-lysine and an essential component of the bacterial peptidoglycan. The polypeptide is Diaminopimelate epimerase (Flavobacterium psychrophilum (strain ATCC 49511 / DSM 21280 / CIP 103535 / JIP02/86)).